A 94-amino-acid polypeptide reads, in one-letter code: Small ribosomal subunit protein bS6 (94 aa).

It belongs to the bacterial ribosomal protein bS6 family.

Functionally, binds together with bS18 to 16S ribosomal RNA. This is Small ribosomal subunit protein bS6 from Phytoplasma mali (strain AT).